The following is a 272-amino-acid chain: Probable ribosomal RNA small subunit methyltransferase A (272 aa).

6 residues coordinate S-adenosyl-L-methionine: N23, L25, G50, E71, D95, and N110.

It belongs to the class I-like SAM-binding methyltransferase superfamily. rRNA adenine N(6)-methyltransferase family. RsmA subfamily.

Its subcellular location is the cytoplasm. Its function is as follows. Specifically dimethylates two adjacent adenosines in the loop of a conserved hairpin near the 3'-end of 16S rRNA in the 30S particle. May play a critical role in biogenesis of 30S subunits. This chain is Probable ribosomal RNA small subunit methyltransferase A, found in Thermococcus onnurineus (strain NA1).